The primary structure comprises 656 residues: Chaperone protein DnaK (656 aa).

Threonine 204 is subject to Phosphothreonine; by autocatalysis. Positions 607–656 (VYAKKGGAAGAPPGGEAEGEPQAQAGGKKEDVVDAEFEEVKDEKKKDEDK) are disordered. Positions 620–632 (GGEAEGEPQAQAG) are enriched in low complexity. Positions 647-656 (KDEKKKDEDK) are enriched in basic and acidic residues.

This sequence belongs to the heat shock protein 70 family.

Its function is as follows. Acts as a chaperone. The sequence is that of Chaperone protein DnaK from Coxiella burnetii (strain CbuK_Q154) (Coxiella burnetii (strain Q154)).